Consider the following 154-residue polypeptide: 17.4 kDa class I heat shock protein (154 aa).

Residues 40–154 (DAAAFAGARI…PDVKSIQITG (115 aa)) form the sHSP domain.

This sequence belongs to the small heat shock protein (HSP20) family. As to quaternary structure, may form oligomeric structures.

It is found in the cytoplasm. The polypeptide is 17.4 kDa class I heat shock protein (HSP17.4) (Oryza sativa subsp. japonica (Rice)).